A 416-amino-acid polypeptide reads, in one-letter code: Probable glucan 1,3-beta-glucosidase A (416 aa).

The signal sequence occupies residues 1–22; that stretch reads MIFKFSQKALVALCLVVGLAEA. E211 (proton donor) is an active-site residue. 2 disulfides stabilise this stretch: C291–C415 and C316–C342. E308 (nucleophile) is an active-site residue.

It belongs to the glycosyl hydrolase 5 (cellulase A) family. As to quaternary structure, monomer. Mn(2+) serves as cofactor.

It is found in the secreted. The enzyme catalyses Successive hydrolysis of beta-D-glucose units from the non-reducing ends of (1-&gt;3)-beta-D-glucans, releasing alpha-glucose.. Its function is as follows. Beta-glucanases participate in the metabolism of beta-glucan, the main structural component of the cell wall. It could also function biosynthetically as a transglycosylase. The polypeptide is Probable glucan 1,3-beta-glucosidase A (exgA) (Neosartorya fischeri (strain ATCC 1020 / DSM 3700 / CBS 544.65 / FGSC A1164 / JCM 1740 / NRRL 181 / WB 181) (Aspergillus fischerianus)).